A 212-amino-acid chain; its full sequence is Peptide methionine sulfoxide reductase MsrA (212 aa).

The active site involves C52.

Belongs to the MsrA Met sulfoxide reductase family.

The enzyme catalyses L-methionyl-[protein] + [thioredoxin]-disulfide + H2O = L-methionyl-(S)-S-oxide-[protein] + [thioredoxin]-dithiol. It carries out the reaction [thioredoxin]-disulfide + L-methionine + H2O = L-methionine (S)-S-oxide + [thioredoxin]-dithiol. Its function is as follows. Has an important function as a repair enzyme for proteins that have been inactivated by oxidation. Catalyzes the reversible oxidation-reduction of methionine sulfoxide in proteins to methionine. The chain is Peptide methionine sulfoxide reductase MsrA from Salmonella arizonae (strain ATCC BAA-731 / CDC346-86 / RSK2980).